The chain runs to 131 residues: Large ribosomal subunit protein bL17 (131 aa).

Belongs to the bacterial ribosomal protein bL17 family. In terms of assembly, part of the 50S ribosomal subunit. Contacts protein L32.

This Shewanella violacea (strain JCM 10179 / CIP 106290 / LMG 19151 / DSS12) protein is Large ribosomal subunit protein bL17.